The primary structure comprises 394 residues: Protein TsgA homolog (394 aa).

12 helical membrane passes run 11–31 (WISYLSYALTGALVIVTGIVM), 51–71 (FLNAGILISIFLNAWLMEIIP), 76–96 (LVFGFILMLIAIAGLMVGHNL), 101–121 (ISMFIFGVVSGITMSIGTFLV), 134–154 (LLFTDSFFSMAGMIFPIAAAM), 162–182 (WYWVYACIGLLYVGIFVLTLC), 206–226 (VGVLFLAIAALCYILGQLGFI), 246–266 (QLVSNFWISYMIGMWIFSFIL), 274–294 (IVTVLAAMATLAMYLFVSTDN), 302–322 (ILALGFVSSAIYTTLITLGSL), 334–354 (FILTCGTVGTMLTFVVTGPIV), and 363–383 (LETANGLYLAVFILCLALGFF).

The protein belongs to the major facilitator superfamily. TsgA family.

Its subcellular location is the cell inner membrane. In Yersinia pestis bv. Antiqua (strain Antiqua), this protein is Protein TsgA homolog.